Here is a 517-residue protein sequence, read N- to C-terminus: NAD(P)H-quinone oxidoreductase subunit 2 (517 aa).

14 consecutive transmembrane segments (helical) span residues 16 to 36, 43 to 63, 80 to 100, 110 to 130, 133 to 153, 168 to 188, 211 to 231, 245 to 265, 279 to 299, 307 to 327, 335 to 355, 379 to 399, 401 to 421, and 467 to 487; these read ILPEGIVIITLVGVLVGDLIF, WLPYMAIIGLLASIVALYLAW, LSIVFRAIIALSTAVTILMSI, LAEFIAIMLTATLGGMFLCGA, LVMIFISLEMLSISSYLMTGY, LLIGASSSAIFLYGVSLLYGL, LGLAIALVFVIAGIAFKISAV, PTPVVAFLSVGSKAAGFALAI, WHFVFTALAILSMVLGNVVAL, MLAYSSIGQAGFVMIGLVAGT, VFYLLVYLFMNLGAFACIILF, LALSICLLSLGGIPPLAGFFG, IYLFWAGWQAELYGLVILGLV, and VGIVLTLIATSLAGILSNPLF.

Belongs to the complex I subunit 2 family. NDH-1 can be composed of about 15 different subunits; different subcomplexes with different compositions have been identified which probably have different functions.

The protein localises to the cellular thylakoid membrane. It catalyses the reaction a plastoquinone + NADH + (n+1) H(+)(in) = a plastoquinol + NAD(+) + n H(+)(out). The catalysed reaction is a plastoquinone + NADPH + (n+1) H(+)(in) = a plastoquinol + NADP(+) + n H(+)(out). Functionally, NDH-1 shuttles electrons from an unknown electron donor, via FMN and iron-sulfur (Fe-S) centers, to quinones in the respiratory and/or the photosynthetic chain. The immediate electron acceptor for the enzyme in this species is believed to be plastoquinone. Couples the redox reaction to proton translocation, and thus conserves the redox energy in a proton gradient. Cyanobacterial NDH-1 also plays a role in inorganic carbon-concentration. The chain is NAD(P)H-quinone oxidoreductase subunit 2 from Rippkaea orientalis (strain PCC 8801 / RF-1) (Cyanothece sp. (strain PCC 8801)).